Here is a 413-residue protein sequence, read N- to C-terminus: Probable tRNA pseudouridine synthase D (413 aa).

Aspartate 97 (nucleophile) is an active-site residue. One can recognise a TRUD domain in the interval 167–370 (AAPNYYGYQR…YGTYRRVRLE (204 aa)).

It belongs to the pseudouridine synthase TruD family.

The catalysed reaction is uridine(13) in tRNA = pseudouridine(13) in tRNA. In terms of biological role, could be responsible for synthesis of pseudouridine from uracil-13 in transfer RNAs. The protein is Probable tRNA pseudouridine synthase D of Pyrobaculum aerophilum (strain ATCC 51768 / DSM 7523 / JCM 9630 / CIP 104966 / NBRC 100827 / IM2).